Reading from the N-terminus, the 647-residue chain is Glutamyl-tRNA(Gln) amidotransferase subunit B, mitochondrial (647 aa).

The transit peptide at 1 to 16 (MARNLCRNVQTTPRPL) directs the protein to the mitochondrion. Residues 39–77 (PRPRYFGSSTAKSAKKKSNNKAYSGSSMSAGDASAGPSR) are disordered. Residues 58–76 (NKAYSGSSMSAGDASAGPS) show a composition bias toward low complexity.

It belongs to the GatB/GatE family. GatB subfamily. Subunit of the heterotrimeric GatCAB amidotransferase (AdT) complex, composed of A, B and C subunits.

The protein resides in the mitochondrion. It carries out the reaction L-glutamyl-tRNA(Gln) + L-glutamine + ATP + H2O = L-glutaminyl-tRNA(Gln) + L-glutamate + ADP + phosphate + H(+). In terms of biological role, allows the formation of correctly charged Gln-tRNA(Gln) through the transamidation of misacylated Glu-tRNA(Gln) in the mitochondria. The reaction takes place in the presence of glutamine and ATP through an activated gamma-phospho-Glu-tRNA(Gln). The chain is Glutamyl-tRNA(Gln) amidotransferase subunit B, mitochondrial from Mycosarcoma maydis (Corn smut fungus).